The following is a 104-amino-acid chain: Large ribosomal subunit protein uL24 (104 aa).

This sequence belongs to the universal ribosomal protein uL24 family. In terms of assembly, part of the 50S ribosomal subunit.

One of two assembly initiator proteins, it binds directly to the 5'-end of the 23S rRNA, where it nucleates assembly of the 50S subunit. Functionally, one of the proteins that surrounds the polypeptide exit tunnel on the outside of the subunit. This chain is Large ribosomal subunit protein uL24, found in Shigella flexneri.